We begin with the raw amino-acid sequence, 586 residues long: Eukaryotic translation initiation factor 3 subunit D (586 aa).

Disordered stretches follow at residues 16–37 (EDSWGPATPSDNMLEGVPYAPF) and 104–176 (KRTF…REPS). The span at 108 to 131 (GRGGGTVFRGRAQRGGAGQRGGRA) shows a compositional bias: gly residues. Residues 162–174 (GWKDYDKPQRTRE) are compositionally biased toward basic and acidic residues. Residues 301–315 (SIDLVTVNENAADAP) form an RNA gate region. A disordered region spans residues 563–586 (ANTFEEDDEAADEQEEKATEESEE). Acidic residues predominate over residues 566-577 (FEEDDEAADEQE).

The protein belongs to the eIF-3 subunit D family. As to quaternary structure, component of the eukaryotic translation initiation factor 3 (eIF-3) complex.

The protein resides in the cytoplasm. MRNA cap-binding component of the eukaryotic translation initiation factor 3 (eIF-3) complex, which is involved in protein synthesis of a specialized repertoire of mRNAs and, together with other initiation factors, stimulates binding of mRNA and methionyl-tRNAi to the 40S ribosome. The eIF-3 complex specifically targets and initiates translation of a subset of mRNAs involved in cell proliferation. In the eIF-3 complex, eif3d specifically recognizes and binds the 7-methylguanosine cap of a subset of mRNAs. The polypeptide is Eukaryotic translation initiation factor 3 subunit D (Aspergillus clavatus (strain ATCC 1007 / CBS 513.65 / DSM 816 / NCTC 3887 / NRRL 1 / QM 1276 / 107)).